A 338-amino-acid chain; its full sequence is 2-oxoglutarate-dependent dioxygenase ecdG (338 aa).

Positions 165–273 (PSVTNLGFLR…KYTLAYFVRP (109 aa)) constitute a Fe2OG dioxygenase domain. 3 residues coordinate Fe cation: histidine 190, aspartate 192, and histidine 249. 2-oxoglutarate is bound at residue lysine 264.

The protein belongs to the iron/ascorbate-dependent oxidoreductase family. It depends on Fe(2+) as a cofactor.

It participates in antifungal biosynthesis. Functionally, 2-oxoglutarate-dependent dioxygenase; part of the gene cluster that mediates the biosynthesis of echinocandin B, a fungal lipidated cyclic hexapeptide that acts as an antifungal agent. Linoleoyl-AMP, produced by the fatty-acyl-AMP ligase ecdI, is transferred to the initiation carrier domain (T0) of ecdA. The linoleoyl-S-phosphopantetheinyl-T0 is sequentially extended with L-ornithine, L-threonine, L-proline, L-homotyrosine, L-threonine, and 4R-methyl-L-proline to form the linear hexapeptide. Thereafter, the terminal condensation (C7) performs macrocyclization of the NRPS product and the cyclic scaffold is released from ecdA. All six of the amino acid residues are hydroxylated, including 4R,5R-dihydroxy-L-ornithine, 4R-hydroxyl-L-proline, 3S,4S-dihydroxy-L-homotyrosine, and 3S-hydroxyl-4S-methyl-L-prolin. In the pathway, all the hydroxylation reactions are proposed to occur following completion of the cyclic peptide, so the unhydroxylated precursor produced by ecdA will undergo six rounds of hydroxylation. Five hydroxylase genes (ecdG, ecdH, ecdK, htyE and htyF) are embedded within the echinocandin B (ecd) and L-homotyrosine (hty) clusters. The chain is 2-oxoglutarate-dependent dioxygenase ecdG from Aspergillus rugulosus (Emericella rugulosa).